The chain runs to 686 residues: Translation initiation factor IF-2 (686 aa).

Residues 61 to 98 (FEVEEKVVRSKKNSNKKKKKGKGNEDKRQENFAGRQQT) are disordered. Residues 69-81 (RSKKNSNKKKKKG) are compositionally biased toward basic residues. The tr-type G domain occupies 188 to 357 (ERPAVVTIMG…LLVSEVEEYK (170 aa)). A G1 region spans residues 197-204 (GHVDHGKT). 197-204 (GHVDHGKT) is a GTP binding site. Positions 222–226 (GITQH) are G2. The tract at residues 243–246 (DTPG) is G3. GTP contacts are provided by residues 243–247 (DTPGH) and 297–300 (NKMD). Residues 297–300 (NKMD) are G4. The tract at residues 333-335 (SAI) is G5.

This sequence belongs to the TRAFAC class translation factor GTPase superfamily. Classic translation factor GTPase family. IF-2 subfamily.

It is found in the cytoplasm. Functionally, one of the essential components for the initiation of protein synthesis. Protects formylmethionyl-tRNA from spontaneous hydrolysis and promotes its binding to the 30S ribosomal subunits. Also involved in the hydrolysis of GTP during the formation of the 70S ribosomal complex. This chain is Translation initiation factor IF-2, found in Bacillus cereus (strain B4264).